The following is a 372-amino-acid chain: Chorismate synthase (372 aa).

2 residues coordinate NADP(+): Arg-48 and Arg-54. Residues 125-127, 238-239, Gly-278, 293-297, and Arg-319 each bind FMN; these read RSS, NA, and KPTSS.

This sequence belongs to the chorismate synthase family. As to quaternary structure, homotetramer. FMNH2 is required as a cofactor.

It catalyses the reaction 5-O-(1-carboxyvinyl)-3-phosphoshikimate = chorismate + phosphate. Its pathway is metabolic intermediate biosynthesis; chorismate biosynthesis; chorismate from D-erythrose 4-phosphate and phosphoenolpyruvate: step 7/7. Catalyzes the anti-1,4-elimination of the C-3 phosphate and the C-6 proR hydrogen from 5-enolpyruvylshikimate-3-phosphate (EPSP) to yield chorismate, which is the branch point compound that serves as the starting substrate for the three terminal pathways of aromatic amino acid biosynthesis. This reaction introduces a second double bond into the aromatic ring system. This is Chorismate synthase from Xylella fastidiosa (strain 9a5c).